A 1173-amino-acid polypeptide reads, in one-letter code: Pumilio homolog 2 (1173 aa).

5 disordered regions span residues 41–68 (VSSAGQAHGNNPHAMPPGAPSAQVPLSG), 265–296 (VSKLNGRGLPNGIESDCKDFNRTPGSRQASPT), 480–518 (QQAATQASQGQQQVMRATSNQRPLTPNQAQQGQQPESLA), 592–662 (LTGA…SLGF), and 730–759 (PISMPLPSQTSGHSLTPPPSLSSHGSSSSL). Positions 287–296 (TPGSRQASPT) are enriched in polar residues. Residues 480 to 492 (QQAATQASQGQQQ) are compositionally biased toward low complexity. Residues 493–518 (VMRATSNQRPLTPNQAQQGQQPESLA) show a composition bias toward polar residues. The span at 606 to 622 (QQQQQQQQQQHQQQQQQ) shows a compositional bias: low complexity. A compositionally biased stretch (polar residues) spans 623-633 (PNANLHSNSFY). The span at 634–657 (GNSTMSNNSQSSSLFSPGPGQPGS) shows a compositional bias: low complexity. Residues 815–1155 (GRSRLLEDFR…HILAKLEKYY (341 aa)) enclose the PUM-HD domain. Pumilio repeat units follow at residues 835-870 (DLMGHIVEFSQDQHGSRFIQQKLERASPAERQLVFS), 871-906 (EILQAAYQLMTDVFGNYVIQKFFEFGSMDQKLALAT), 907-942 (RIRGHVLPLALQMYGCRVIQKALESISTDQQSEMVR), 943-978 (ELDGHVLKCVKDQNGNHVVQKCIECVTPQSLHFIIE), 979-1014 (AFKGQVYVLSTHPYGCRVIQRILEHCTPEQTLPILE), 1015-1050 (ELHQSTEQLVQDQYGNYVIQHVLEHGRSDDKSKIVC), 1051-1086 (EVRGQVLVLSQHKFASNVVEKCVTHSSRTERAFLID), 1087-1129 (EICC…IIMH), and 1130-1167 (KIRPHITTLRKYTYGKHILAKLEKYYMKNSPDLGLLVG). The interval 850–854 (SRFIQ) is adenine-nucleotide binding in RNA target. The uracil-nucleotide binding in RNA target stretch occupies residues 886–890 (NYVIQ). The adenine-nucleotide binding in RNA target stretch occupies residues 922–926 (CRVIQ). The segment at 958–962 (NHVVQ) is non-specific-nucleotide binding in RNA target. An adenine-nucleotide binding in RNA target region spans residues 994–998 (CRVIQ). Residues 1030–1034 (NYVIQ) form a uracil-nucleotide binding in RNA target region. The segment at 1066–1070 (SNVVE) is guanine-nucleotide binding in RNA target. The tract at residues 1109 to 1113 (NYVVQ) is uracil-nucleotide binding in RNA target.

Component of a complex with papd4, sympk, tacc3, parn, dazl and cpeb1. In terms of processing, phosphorylated.

It is found in the cytoplasm. The protein localises to the P-body. The protein resides in the cytoplasmic granule. Its function is as follows. Sequence-specific RNA-binding protein that acts as a post-transcriptional repressor by binding the 3'-UTR of mRNA targets. Binds to an RNA consensus sequence, the Pumilio Response Element (PRE), 5'-UGUANAUA-3', that is related to the Nanos Response Element (NRE). Mediates post-transcriptional repression of transcripts via different mechanisms: acts via direct recruitment of deadenylase complexes leading to translational inhibition and mRNA degradation. Also mediates deadenylation-independent repression by promoting accessibility of miRNAs. This Xenopus laevis (African clawed frog) protein is Pumilio homolog 2 (pum2).